The primary structure comprises 501 residues: Ammonium transporter 1 member 1 (501 aa).

The next 10 membrane-spanning stretches (helical) occupy residues 8-28, 46-66, 81-101, 128-148, 152-172, 199-219, 243-263, 333-353, 366-386, and 419-439; these read LAVL…GQLG, LLFS…LCAG, VLDA…FAFG, FLYQ…SIAE, FVAY…VVSH, FAGS…GALI, LVVL…PGSF, VVEP…LLGC, LEAA…TALF, and LIQI…LFFI. Thr-460 bears the Phosphothreonine mark. Residues Ser-475, Ser-488, Ser-490, and Ser-492 each carry the phosphoserine modification.

This sequence belongs to the ammonia transporter channel (TC 1.A.11.2) family. In terms of assembly, self interacts. Interacts with the receptor protein kinases CEPR2, At2g28990 and PAM74. Highly expressed in roots. Expressed in root tips, root hairs, root epidermis, rhizodermis, cortex and pericycle. Expressed in leaves epidermal and mesophyll cells.

Its subcellular location is the cell membrane. Its function is as follows. High affinity ammonium transporter probably involved in ammonium uptake from the soil, long-distance transport to the shoots and re-uptake of apoplastic ammonium that derives from photorespiration in shoots. Contributes with AMT1-3 to the overall ammonium uptake capacity in roots under nitrogen-deficiency conditions. The polypeptide is Ammonium transporter 1 member 1 (AMT1-1) (Arabidopsis thaliana (Mouse-ear cress)).